We begin with the raw amino-acid sequence, 111 residues long: T cell receptor beta variable 20-1 (111 aa).

Residues 1-15 (MLLLLLLLGPGSGLG) form the signal peptide. Residues 16-111 (AVVSQHPSRV…DSSFYICSAR (96 aa)) enclose the Ig-like domain. An intrachain disulfide couples cysteine 37 to cysteine 108.

In terms of assembly, alpha-beta TR is a heterodimer composed of an alpha and beta chain; disulfide-linked. The alpha-beta TR is associated with the transmembrane signaling CD3 coreceptor proteins to form the TR-CD3 (TcR or TCR). The assembly of alpha-beta TR heterodimers with CD3 occurs in the endoplasmic reticulum where a single alpha-beta TR heterodimer associates with one CD3D-CD3E heterodimer, one CD3G-CD3E heterodimer and one CD247 homodimer forming a stable octameric structure. CD3D-CD3E and CD3G-CD3E heterodimers preferentially associate with TR alpha and TR beta chains, respectively. The association of the CD247 homodimer is the last step of TcR assembly in the endoplasmic reticulum and is required for transport to the cell surface.

The protein localises to the cell membrane. Functionally, v region of the variable domain of T cell receptor (TR) beta chain that participates in the antigen recognition. Alpha-beta T cell receptors are antigen specific receptors which are essential to the immune response and are present on the cell surface of T lymphocytes. Recognize peptide-major histocompatibility (MH) (pMH) complexes that are displayed by antigen presenting cells (APC), a prerequisite for efficient T cell adaptive immunity against pathogens. Binding of alpha-beta TR to pMH complex initiates TR-CD3 clustering on the cell surface and intracellular activation of LCK that phosphorylates the ITAM motifs of CD3G, CD3D, CD3E and CD247 enabling the recruitment of ZAP70. In turn ZAP70 phosphorylates LAT, which recruits numerous signaling molecules to form the LAT signalosome. The LAT signalosome propagates signal branching to three major signaling pathways, the calcium, the mitogen-activated protein kinase (MAPK) kinase and the nuclear factor NF-kappa-B (NF-kB) pathways, leading to the mobilization of transcription factors that are critical for gene expression and essential for T cell growth and differentiation. The T cell repertoire is generated in the thymus, by V-(D)-J rearrangement. This repertoire is then shaped by intrathymic selection events to generate a peripheral T cell pool of self-MH restricted, non-autoaggressive T cells. Post-thymic interaction of alpha-beta TR with the pMH complexes shapes TR structural and functional avidity. The protein is T cell receptor beta variable 20-1 of Homo sapiens (Human).